Here is a 439-residue protein sequence, read N- to C-terminus: MDHNIYLIGLNHRSAGVDVRERYALTNVEEFESGLLELGVREVMALSTCNRVEILVVCAPEITQPNILEYWAKRCCGSVSELEPNTYCHDGLNAVKHLFRVACSLDSMIVGEPQILGQLKDSYRKAVEAGAARVIINRMLHKSFFVAKRVRTETSIASSAVSISYAAVELAKKIFGELEGQRAMLIGAGEMAELAATHLLNSGVEQISIANRTYSRAEDLAKCMGGSAVSFDNLYDHLVETDIIISSTGAPHAVISAKEMKKVIKKRKYRPMFFIDIAVPRDIDPDVNGLDNVYLYDIDDLKDVVEENKSQREDEAIKANSIVEFETLSFGNWINSLDLQPTIVDLFNRSENVAQQELAKTLKRLGDVDAKTHKALETMAMSIGKKLLHEPVAFLKRRTEEEGKADEFVDLARRMFNLDNETIPADAHCGRKKNRNPEN.

Substrate is bound by residues 48–51 (TCNR), S107, 112–114 (EPQ), and Q118. The active-site Nucleophile is C49. 187 to 192 (GAGEMA) is a binding site for NADP(+).

Belongs to the glutamyl-tRNA reductase family. As to quaternary structure, homodimer.

It carries out the reaction (S)-4-amino-5-oxopentanoate + tRNA(Glu) + NADP(+) = L-glutamyl-tRNA(Glu) + NADPH + H(+). It functions in the pathway porphyrin-containing compound metabolism; protoporphyrin-IX biosynthesis; 5-aminolevulinate from L-glutamyl-tRNA(Glu): step 1/2. In terms of biological role, catalyzes the NADPH-dependent reduction of glutamyl-tRNA(Glu) to glutamate 1-semialdehyde (GSA). This chain is Glutamyl-tRNA reductase, found in Maridesulfovibrio salexigens (strain ATCC 14822 / DSM 2638 / NCIMB 8403 / VKM B-1763) (Desulfovibrio salexigens).